The following is a 601-amino-acid chain: 4-hydroxy-3-methylbut-2-en-1-yl diphosphate synthase (flavodoxin) (601 aa).

4 residues coordinate [4Fe-4S] cluster: Cys507, Cys510, Cys542, and Glu549.

The protein belongs to the IspG family. The cofactor is [4Fe-4S] cluster.

It carries out the reaction (2E)-4-hydroxy-3-methylbut-2-enyl diphosphate + oxidized [flavodoxin] + H2O + 2 H(+) = 2-C-methyl-D-erythritol 2,4-cyclic diphosphate + reduced [flavodoxin]. Its pathway is isoprenoid biosynthesis; isopentenyl diphosphate biosynthesis via DXP pathway; isopentenyl diphosphate from 1-deoxy-D-xylulose 5-phosphate: step 5/6. In terms of biological role, converts 2C-methyl-D-erythritol 2,4-cyclodiphosphate (ME-2,4cPP) into 1-hydroxy-2-methyl-2-(E)-butenyl 4-diphosphate. This chain is 4-hydroxy-3-methylbut-2-en-1-yl diphosphate synthase (flavodoxin), found in Chlamydia muridarum (strain MoPn / Nigg).